A 180-amino-acid polypeptide reads, in one-letter code: GTP cyclohydrolase 1 (180 aa).

Cys71, His74, and Cys142 together coordinate Zn(2+).

Belongs to the GTP cyclohydrolase I family. Homomer.

It catalyses the reaction GTP + H2O = 7,8-dihydroneopterin 3'-triphosphate + formate + H(+). It participates in cofactor biosynthesis; 7,8-dihydroneopterin triphosphate biosynthesis; 7,8-dihydroneopterin triphosphate from GTP: step 1/1. The protein is GTP cyclohydrolase 1 of Helicobacter pylori (strain Shi470).